The chain runs to 108 residues: Iron-sulfur cluster assembly protein CyaY (108 aa).

It belongs to the frataxin family.

Its function is as follows. Involved in iron-sulfur (Fe-S) cluster assembly. May act as a regulator of Fe-S biogenesis. The chain is Iron-sulfur cluster assembly protein CyaY from Pseudoalteromonas atlantica (strain T6c / ATCC BAA-1087).